We begin with the raw amino-acid sequence, 330 residues long: Succinylglutamate desuccinylase (330 aa).

The Zn(2+) site is built by histidine 53, glutamate 56, and histidine 147. The active site involves glutamate 210.

It belongs to the AspA/AstE family. Succinylglutamate desuccinylase subfamily. It depends on Zn(2+) as a cofactor.

The enzyme catalyses N-succinyl-L-glutamate + H2O = L-glutamate + succinate. Its pathway is amino-acid degradation; L-arginine degradation via AST pathway; L-glutamate and succinate from L-arginine: step 5/5. Functionally, transforms N(2)-succinylglutamate into succinate and glutamate. In Yersinia pseudotuberculosis serotype O:3 (strain YPIII), this protein is Succinylglutamate desuccinylase.